We begin with the raw amino-acid sequence, 605 residues long: Zinc metalloproteinase-disintegrin-like BfMP (605 aa).

The signal sequence occupies residues 1-11 (MLVVFPYQGSS). Positions 12–179 (IILESGNVND…WESDEPFKNT (168 aa)) are excised as a propeptide. N-linked (GlcNAc...) asparagine glycans are attached at residues asparagine 178 and asparagine 215. The 197-residue stretch at 196–392 (KYIEFYVAVD…DRPQCILNKP (197 aa)) folds into the Peptidase M12B domain. Intrachain disulfides connect cysteine 307–cysteine 387, cysteine 347–cysteine 371, cysteine 350–cysteine 355, cysteine 403–cysteine 432, cysteine 414–cysteine 427, cysteine 416–cysteine 422, cysteine 426–cysteine 449, cysteine 440–cysteine 446, cysteine 445–cysteine 471, cysteine 458–cysteine 478, cysteine 465–cysteine 497, cysteine 490–cysteine 502, cysteine 509–cysteine 559, cysteine 524–cysteine 567, cysteine 537–cysteine 547, cysteine 554–cysteine 593, and cysteine 587–cysteine 598. Histidine 332 provides a ligand contact to Zn(2+). Residue glutamate 333 is part of the active site. Histidine 336 and histidine 342 together coordinate Zn(2+). The region spanning 400–486 (PAICGNYFVE…ECPTDIFRRN (87 aa)) is the Disintegrin domain. The D/ECD-tripeptide signature appears at 464–466 (DCD).

It belongs to the venom metalloproteinase (M12B) family. P-III subfamily. P-IIIa sub-subfamily. As to quaternary structure, monomer. Zn(2+) serves as cofactor. As to expression, expressed by the venom gland.

The protein resides in the secreted. Functionally, snake venom zinc metalloproteinase that inhibits platelet aggregation and degrades fibrinogen. The protein is Zinc metalloproteinase-disintegrin-like BfMP of Bungarus fasciatus (Banded krait).